A 368-amino-acid polypeptide reads, in one-letter code: Glutamate 5-kinase (368 aa).

Residue Lys9 participates in ATP binding. Substrate is bound by residues Ser49, Asp136, and Asn148. ATP is bound by residues 168–169 and 210–216; these read TD and TGGMMTK. Positions 275–353 constitute a PUA domain; the sequence is AGIITIDNGA…ADIENVLGYE (79 aa).

This sequence belongs to the glutamate 5-kinase family.

The protein resides in the cytoplasm. It carries out the reaction L-glutamate + ATP = L-glutamyl 5-phosphate + ADP. It participates in amino-acid biosynthesis; L-proline biosynthesis; L-glutamate 5-semialdehyde from L-glutamate: step 1/2. In terms of biological role, catalyzes the transfer of a phosphate group to glutamate to form L-glutamate 5-phosphate. The sequence is that of Glutamate 5-kinase from Haemophilus influenzae (strain PittEE).